Here is a 245-residue protein sequence, read N- to C-terminus: 1-(5-phosphoribosyl)-5-[(5-phosphoribosylamino)methylideneamino] imidazole-4-carboxamide isomerase (245 aa).

The Proton acceptor role is filled by Asp-8. The active-site Proton donor is Asp-130.

The protein belongs to the HisA/HisF family.

It localises to the cytoplasm. The enzyme catalyses 1-(5-phospho-beta-D-ribosyl)-5-[(5-phospho-beta-D-ribosylamino)methylideneamino]imidazole-4-carboxamide = 5-[(5-phospho-1-deoxy-D-ribulos-1-ylimino)methylamino]-1-(5-phospho-beta-D-ribosyl)imidazole-4-carboxamide. It functions in the pathway amino-acid biosynthesis; L-histidine biosynthesis; L-histidine from 5-phospho-alpha-D-ribose 1-diphosphate: step 4/9. This Marinobacter nauticus (strain ATCC 700491 / DSM 11845 / VT8) (Marinobacter aquaeolei) protein is 1-(5-phosphoribosyl)-5-[(5-phosphoribosylamino)methylideneamino] imidazole-4-carboxamide isomerase.